Reading from the N-terminus, the 205-residue chain is Histidine biosynthesis bifunctional protein HisIE (205 aa).

Positions 1 to 116 are phosphoribosyl-AMP cyclohydrolase; it reads MLKLKFNEEG…KVEKPLPFEV (116 aa). The phosphoribosyl-ATP pyrophosphohydrolase stretch occupies residues 117–205; that stretch reads LPRLQDVIRE…VMEELIRRFK (89 aa).

This sequence in the N-terminal section; belongs to the PRA-CH family. The protein in the C-terminal section; belongs to the PRA-PH family.

The protein localises to the cytoplasm. It carries out the reaction 1-(5-phospho-beta-D-ribosyl)-ATP + H2O = 1-(5-phospho-beta-D-ribosyl)-5'-AMP + diphosphate + H(+). It catalyses the reaction 1-(5-phospho-beta-D-ribosyl)-5'-AMP + H2O = 1-(5-phospho-beta-D-ribosyl)-5-[(5-phospho-beta-D-ribosylamino)methylideneamino]imidazole-4-carboxamide. It functions in the pathway amino-acid biosynthesis; L-histidine biosynthesis; L-histidine from 5-phospho-alpha-D-ribose 1-diphosphate: step 2/9. The protein operates within amino-acid biosynthesis; L-histidine biosynthesis; L-histidine from 5-phospho-alpha-D-ribose 1-diphosphate: step 3/9. This Aquifex aeolicus (strain VF5) protein is Histidine biosynthesis bifunctional protein HisIE (hisI).